The chain runs to 300 residues: 33 kDa chaperonin (300 aa).

Cystine bridges form between Cys235/Cys237 and Cys269/Cys272.

It belongs to the HSP33 family. Under oxidizing conditions two disulfide bonds are formed involving the reactive cysteines. Under reducing conditions zinc is bound to the reactive cysteines and the protein is inactive.

It localises to the cytoplasm. Its function is as follows. Redox regulated molecular chaperone. Protects both thermally unfolding and oxidatively damaged proteins from irreversible aggregation. Plays an important role in the bacterial defense system toward oxidative stress. The chain is 33 kDa chaperonin from Pseudomonas syringae pv. syringae (strain B728a).